The primary structure comprises 111 residues: Prefoldin subunit 2 (111 aa).

Coiled-coil stretches lie at residues 1-36 (MEQRNNVFQAKYNEYKQILEELQTKIIELGHDKDEH) and 72-92 (LETKKENIEGTISKMKETLIQ).

It belongs to the prefoldin subunit beta family. Heterohexamer of two PFD-alpha type and four PFD-beta type subunits.

The protein resides in the cytoplasm. In terms of biological role, binds specifically to cytosolic chaperonin (c-CPN) and transfers target proteins to it. Binds to nascent polypeptide chain and promotes folding in an environment in which there are many competing pathways for nonnative proteins. The polypeptide is Prefoldin subunit 2 (GIM4) (Saccharomyces cerevisiae (strain ATCC 204508 / S288c) (Baker's yeast)).